We begin with the raw amino-acid sequence, 252 residues long: Triosephosphate isomerase (252 aa).

Asn10–Lys12 is a binding site for substrate. His96 acts as the Electrophile in catalysis. Residue Glu168 is the Proton acceptor of the active site. Substrate-binding positions include Gly174, Ser214, and Gly235–Gly236.

Belongs to the triosephosphate isomerase family. Homodimer.

It localises to the cytoplasm. The enzyme catalyses D-glyceraldehyde 3-phosphate = dihydroxyacetone phosphate. The protein operates within carbohydrate biosynthesis; gluconeogenesis. It functions in the pathway carbohydrate degradation; glycolysis; D-glyceraldehyde 3-phosphate from glycerone phosphate: step 1/1. Functionally, involved in the gluconeogenesis. Catalyzes stereospecifically the conversion of dihydroxyacetone phosphate (DHAP) to D-glyceraldehyde-3-phosphate (G3P). This Streptococcus pyogenes serotype M2 (strain MGAS10270) protein is Triosephosphate isomerase.